The primary structure comprises 484 residues: Protein nucleotidyltransferase YdiU (484 aa).

Positions 81, 83, 84, 103, 115, 116, 166, and 173 each coordinate ATP. The active-site Proton acceptor is the Asp-244. Mg(2+)-binding residues include Asn-245 and Asp-254. Asp-254 provides a ligand contact to ATP.

The protein belongs to the SELO family. The cofactor is Mg(2+). Mn(2+) is required as a cofactor.

It catalyses the reaction L-seryl-[protein] + ATP = 3-O-(5'-adenylyl)-L-seryl-[protein] + diphosphate. The enzyme catalyses L-threonyl-[protein] + ATP = 3-O-(5'-adenylyl)-L-threonyl-[protein] + diphosphate. It carries out the reaction L-tyrosyl-[protein] + ATP = O-(5'-adenylyl)-L-tyrosyl-[protein] + diphosphate. The catalysed reaction is L-histidyl-[protein] + UTP = N(tele)-(5'-uridylyl)-L-histidyl-[protein] + diphosphate. It catalyses the reaction L-seryl-[protein] + UTP = O-(5'-uridylyl)-L-seryl-[protein] + diphosphate. The enzyme catalyses L-tyrosyl-[protein] + UTP = O-(5'-uridylyl)-L-tyrosyl-[protein] + diphosphate. Functionally, nucleotidyltransferase involved in the post-translational modification of proteins. It can catalyze the addition of adenosine monophosphate (AMP) or uridine monophosphate (UMP) to a protein, resulting in modifications known as AMPylation and UMPylation. This is Protein nucleotidyltransferase YdiU from Shewanella putrefaciens (strain CN-32 / ATCC BAA-453).